A 123-amino-acid chain; its full sequence is Small ribosomal subunit protein uS12 (123 aa).

Residues 1-27 (MPTIQQLIRKPRQPKIKRSKSMHLQEC) are disordered. Over residues 9–21 (RKPRQPKIKRSKS) the composition is skewed to basic residues. Aspartate 89 carries the 3-methylthioaspartic acid modification.

Belongs to the universal ribosomal protein uS12 family. As to quaternary structure, part of the 30S ribosomal subunit. Contacts proteins S8 and S17. May interact with IF1 in the 30S initiation complex.

Its function is as follows. With S4 and S5 plays an important role in translational accuracy. In terms of biological role, interacts with and stabilizes bases of the 16S rRNA that are involved in tRNA selection in the A site and with the mRNA backbone. Located at the interface of the 30S and 50S subunits, it traverses the body of the 30S subunit contacting proteins on the other side and probably holding the rRNA structure together. The combined cluster of proteins S8, S12 and S17 appears to hold together the shoulder and platform of the 30S subunit. This Roseobacter denitrificans (strain ATCC 33942 / OCh 114) (Erythrobacter sp. (strain OCh 114)) protein is Small ribosomal subunit protein uS12.